A 734-amino-acid polypeptide reads, in one-letter code: Ribosomal biogenesis protein LAS1L (734 aa).

The segment at 204 to 255 (EGIEEEDQEEDKNIVVDDITEQKPEPQDDGKSTESDVKADGDSKGSEEVDSH) is disordered. The segment covering 214–255 (DKNIVVDDITEQKPEPQDDGKSTESDVKADGDSKGSEEVDSH) has biased composition (basic and acidic residues). Residues K215 and K226 each participate in a glycyl lysine isopeptide (Lys-Gly) (interchain with G-Cter in SUMO2) cross-link. A phosphoserine mark is found at S441, S523, and S560. The segment covering 547 to 561 (GSEAKAQQQEEQGSV) has biased composition (polar residues). A disordered region spans residues 547-619 (GSEAKAQQQE…PFSTGQESPT (73 aa)). Residues 563-575 (DVKEEEKEEKEVL) show a composition bias toward basic and acidic residues. A compositionally biased stretch (acidic residues) spans 578 to 605 (QVEEEEENDDQEEEEEDEDDEDDEEEDR). Residue S617 is modified to Phosphoserine. Residues 636 to 655 (SAWQVSSEDVRWDTFPLGRM) form an interaction with NOL9 region.

Belongs to the LAS1 family. Component of some MLL1/MLL complex, at least composed of the core components KMT2A/MLL1, ASH2L, HCFC1/HCF1, WDR5 and RBBP5, as well as the facultative components BACC1, CHD8, E2F6, HSP70, INO80C, KANSL1, LAS1L, MAX, MCRS1, MGA, KAT8/MOF, PELP1, PHF20, PRP31, RING2, RUVB1/TIP49A, RUVB2/TIP49B, SENP3, TAF1, TAF4, TAF6, TAF7, TAF9 and TEX10. Component of the 5FMC complex, at least composed of PELP1, LAS1L, TEX10, WDR18 and SENP3; the complex interacts with methylated CHTOP and ZNF148. Interacts with NOL9 to form an ITS2 pre-rRNA endonuclease-kinase complex.

The protein resides in the nucleus. It localises to the nucleolus. The protein localises to the nucleoplasm. Its subcellular location is the cytoplasm. Its function is as follows. Required for the synthesis of the 60S ribosomal subunit and maturation of the 28S rRNA. Functions as a component of the Five Friends of Methylated CHTOP (5FMC) complex; the 5FMC complex is recruited to ZNF148 by methylated CHTOP, leading to desumoylation of ZNF148 and subsequent transactivation of ZNF148 target genes. Required for the efficient pre-rRNA processing at both ends of internal transcribed spacer 2 (ITS2). This is Ribosomal biogenesis protein LAS1L (LAS1L) from Homo sapiens (Human).